Consider the following 309-residue polypeptide: Mitochondrial import receptor subunit TOM34 (309 aa).

TPR repeat units lie at residues 9 to 42 (VEEL…LQAQ), 51 to 84 (SVLY…VPFS), and 86 to 118 (KPLL…DDSV). Residue Ser-160 is modified to Phosphoserine. Positions 161–189 (LPSENHKEMAKSKSKETTATKNRVPSAGD) are disordered. A compositionally biased stretch (basic and acidic residues) spans 164-178 (ENHKEMAKSKSKETT). Residue Ser-186 is modified to Phosphoserine. TPR repeat units follow at residues 193-226 (AKVL…SNLE), 227-260 (SATY…DGKN), and 262-294 (KAFY…EPRN). Lys-197 is covalently cross-linked (Glycyl lysine isopeptide (Lys-Gly) (interchain with G-Cter in SUMO2)).

It belongs to the Tom34 family. In terms of assembly, interacts with HSP90A, VCP, ATP6V1D, KIAA0665, AMPK, and DMAP1 through its TPR repeat.

It is found in the cytoplasm. Its subcellular location is the mitochondrion outer membrane. Functionally, plays a role in the import of cytosolically synthesized preproteins into mitochondria. Binds the mature portion of precursor proteins. Interacts with cellular components, and possesses weak ATPase activity. May be a chaperone-like protein that helps to keep newly synthesized precursors in an unfolded import compatible state. The chain is Mitochondrial import receptor subunit TOM34 (TOMM34) from Pongo abelii (Sumatran orangutan).